A 437-amino-acid chain; its full sequence is Transcription factor E2F1 (437 aa).

Disordered regions lie at residues 42-87 and 101-128; these read ASAP…GRPP and LAES…KSRY. Residues 67-108 are cyclin A:CDK2 binding; it reads ATPQAPRPTPSAPRPALGRPPVKRRLDLETDHQYLAESSGPA. The tract at residues 89–191 is interaction with BIRC2/c-IAP1; the sequence is KRRLDLETDH…KKSKNHIQWL (103 aa). Residues 110–194 mediate DNA binding; it reads GRGRHPGKGV…KNHIQWLGSH (85 aa). An N6-acetyllysine mark is found at K117, K120, and K125. Positions 153–174 are leucine-zipper; that stretch reads LNWAAEVLKVQKRRIYDITNVL. The DEF box signature appears at 158–194; sequence EVLKVQKRRIYDITNVLEGIQLIAKKSKNHIQWLGSH. K185 carries the N6-methyllysine; by SETD7 modification. Positions 192 to 382 are required for interaction with TRIM28; sequence GSHTTVGVGG…RLSPLVAADS (191 aa). Residues 195–284 form a dimerization region; that stretch reads TTVGVGGRLE…AVDSSENFQI (90 aa). Residues 300-349 are disordered; sequence EETVGGISPGKTPSQEVTSEEENRATDSATIVSPPPSSPPSSLTTDPSQS. The segment covering 339 to 349 has biased composition (low complexity); sequence PSSLTTDPSQS. S364 carries the phosphoserine; by CHEK2 modification. A transactivation region spans residues 368-437; sequence PVDEDRLSPL…DFGDLTPLDF (70 aa). S375 carries the post-translational modification Phosphoserine. S403 is modified (phosphoserine; by GSK3-beta). The segment at 409–426 is RB1 binding; it reads LDYHFGLEEGEGIRDLFD. The residue at position 433 (T433) is a Phosphothreonine; by GSK3-beta.

The protein belongs to the E2F/DP family. As to quaternary structure, component of the DRTF1/E2F transcription factor complex. Forms heterodimers with DP family members. The E2F1 complex binds specifically hypophosphorylated RB1, the interaction represses E2F1-driven transcription. During the cell cycle, RB1 becomes phosphorylated in mid-to-late G1 phase, detaches from the DRTF1/E2F complex, rendering E2F transcriptionally active. Viral oncoproteins, notably E1A, T-antigen and HPV E7, are capable of sequestering RB1, thus releasing the active complex. Interacts with TRRAP, which probably mediates its interaction with histone acetyltransferase complexes, leading to transcription activation. Binds TOPBP1 and EAPP. Interacts with ARID3A. Interacts with TRIM28; the interaction inhibits E2F1 acetylation through recruiting HDAC1 and represses its transcriptional activity. Interaction with KAT2B; the interaction acetylates E2F1 enhancing its DNA-binding and transcriptional activity. Interacts with BIRC2/c-IAP1 (via BIR domains). The complex TFDP1:E2F1 interacts with CEBPA; the interaction prevents CEBPA binding to target genes promoters and represses its transcriptional activity. Interacts with RRP1B. Interacts with HCFC1. Interacts with KMT2E; the interaction is probably indirect and is mediated via HCFC1. Interacts with DCAF5 and L3MBTL3; the interaction requires methylation at Lys-185 and is necessary to target E2F1 for ubiquitination by the CRL4-DCAF5 E3 ubiquitin ligase complex. (Microbial infection) Interacts with human cytomegalovirus/HHV-5 protein UL123. In terms of processing, phosphorylated by CDK2 and cyclin A-CDK2 in the S-phase. Phosphorylation at Ser-364 by CHEK2 stabilizes E2F1 upon DNA damage and regulates its effect on transcription and apoptosis. Phosphorylation at Ser-403 by GSK3B promotes interaction with USP11, leading to its deubiquitination and stabilization. Ubiquitinated via 'Lys-63'-linked ubiquitin, leading to its degradation. Deubiquitinated by USP11 following phosphorylation by GSK3B, promoting its stability. Post-translationally, acetylation stimulates DNA-binding. Enhanced under stress conditions such as DNA damage and inhibited by retinoblastoma protein RB1. Regulated by KAP1/TRIM28 which recruits HDAC1 to E2F1 resulting in deacetylation. Acetylated by P/CAF/KAT2B. In terms of processing, methylation at Lys-185 by SETD7 promotes E2F1 ubiquitin-dependent proteasomal degradation.

The protein resides in the nucleus. BIRC2/c-IAP1 stimulates its transcriptional activity. Transcription activator that binds DNA cooperatively with DP proteins through the E2 recognition site, 5'-TTTC[CG]CGC-3' found in the promoter region of a number of genes whose products are involved in cell cycle regulation or in DNA replication. The DRTF1/E2F complex functions in the control of cell-cycle progression from G1 to S phase. E2F1 binds preferentially RB1 in a cell-cycle dependent manner. It can mediate both cell proliferation and TP53/p53-dependent apoptosis. Blocks adipocyte differentiation by binding to specific promoters repressing CEBPA binding to its target gene promoters. Directly activates transcription of PEG10. Positively regulates transcription of RRP1B. This Homo sapiens (Human) protein is Transcription factor E2F1.